The chain runs to 432 residues: Lysosomal acid phosphatase (432 aa).

The first 32 residues, 1 to 32 (MADGSCLGSGPQLGLIALLVVLLFSAVPLAQS), serve as a signal peptide directing secretion. Topologically, residues 33–384 (RELRFVTLVY…TTSFIMTEET (352 aa)) are lumenal. Catalysis depends on histidine 44, which acts as the Nucleophile. Asparagine 94, asparagine 135, asparagine 179, asparagine 193, and asparagine 269 each carry an N-linked (GlcNAc...) asparagine glycan. 3 disulfides stabilise this stretch: cysteine 161-cysteine 373, cysteine 214-cysteine 313, and cysteine 348-cysteine 352. The Proton donor role is filled by aspartate 290. 2 N-linked (GlcNAc...) asparagine glycosylation sites follow: asparagine 325 and asparagine 334. The helical transmembrane segment at 385 to 405 (IIGLTIGAIALFIIIVVLMLL) threads the bilayer. Residues 406 to 432 (SCNEPKDDGYQHVSDEGDDHETKGLAM) are Cytoplasmic-facing.

Belongs to the histidine acid phosphatase family. The membrane-bound form is converted to the soluble form by sequential proteolytic processing. First, the C-terminal cytoplasmic tail is removed. Cleavage by a lysosomal protease releases the soluble form in the lysosome lumen.

Its subcellular location is the lysosome membrane. The protein localises to the lysosome lumen. It carries out the reaction a phosphate monoester + H2O = an alcohol + phosphate. The chain is Lysosomal acid phosphatase (acp2) from Xenopus laevis (African clawed frog).